Reading from the N-terminus, the 763-residue chain is Protein translocase subunit SecA 2 (763 aa).

Residues Gln83, 101–105 (GEGKT), and Asp490 each bind ATP.

The protein belongs to the SecA family. Monomer and homodimer. Part of the essential Sec protein translocation apparatus which comprises SecA, SecYEG and auxiliary proteins SecDF. Other proteins may also be involved.

Its subcellular location is the cell membrane. It localises to the cytoplasm. The catalysed reaction is ATP + H2O + cellular proteinSide 1 = ADP + phosphate + cellular proteinSide 2.. In terms of biological role, part of the Sec protein translocase complex. Interacts with the SecYEG preprotein conducting channel. Has a central role in coupling the hydrolysis of ATP to the transfer of proteins into and across the cell membrane, serving as an ATP-driven molecular motor driving the stepwise translocation of polypeptide chains across the membrane. This is Protein translocase subunit SecA 2 from Corynebacterium glutamicum (strain ATCC 13032 / DSM 20300 / JCM 1318 / BCRC 11384 / CCUG 27702 / LMG 3730 / NBRC 12168 / NCIMB 10025 / NRRL B-2784 / 534).